The following is a 237-amino-acid chain: Uridylate kinase (237 aa).

12 to 15 (KLSG) provides a ligand contact to ATP. The tract at residues 20 to 25 (GENGYG) is involved in allosteric activation by GTP. Gly54 contributes to the UMP binding site. ATP contacts are provided by Gly55 and Arg59. Residues Asp72 and 133–140 (TGNPYFST) contribute to the UMP site. Tyr166 and Asp169 together coordinate ATP.

It belongs to the UMP kinase family. As to quaternary structure, homohexamer.

Its subcellular location is the cytoplasm. The enzyme catalyses UMP + ATP = UDP + ADP. The protein operates within pyrimidine metabolism; CTP biosynthesis via de novo pathway; UDP from UMP (UMPK route): step 1/1. Allosterically activated by GTP. Inhibited by UTP. Its function is as follows. Catalyzes the reversible phosphorylation of UMP to UDP. The protein is Uridylate kinase of Clostridium tetani (strain Massachusetts / E88).